Here is a 512-residue protein sequence, read N- to C-terminus: ATP synthase subunit alpha (512 aa).

169–176 (GDRQTGKT) is an ATP binding site.

It belongs to the ATPase alpha/beta chains family. F-type ATPases have 2 components, CF(1) - the catalytic core - and CF(0) - the membrane proton channel. CF(1) has five subunits: alpha(3), beta(3), gamma(1), delta(1), epsilon(1). CF(0) has three main subunits: a(1), b(2) and c(9-12). The alpha and beta chains form an alternating ring which encloses part of the gamma chain. CF(1) is attached to CF(0) by a central stalk formed by the gamma and epsilon chains, while a peripheral stalk is formed by the delta and b chains.

The protein resides in the cell membrane. It carries out the reaction ATP + H2O + 4 H(+)(in) = ADP + phosphate + 5 H(+)(out). Its function is as follows. Produces ATP from ADP in the presence of a proton gradient across the membrane. The alpha chain is a regulatory subunit. The sequence is that of ATP synthase subunit alpha from Buchnera aphidicola subsp. Acyrthosiphon pisum (strain 5A).